Consider the following 128-residue polypeptide: Large ribosomal subunit protein bL12 (128 aa).

The protein belongs to the bacterial ribosomal protein bL12 family. As to quaternary structure, homodimer. Part of the ribosomal stalk of the 50S ribosomal subunit. Forms a multimeric L10(L12)X complex, where L10 forms an elongated spine to which 2 to 4 L12 dimers bind in a sequential fashion. Binds GTP-bound translation factors.

In terms of biological role, forms part of the ribosomal stalk which helps the ribosome interact with GTP-bound translation factors. Is thus essential for accurate translation. In Corynebacterium aurimucosum (strain ATCC 700975 / DSM 44827 / CIP 107346 / CN-1) (Corynebacterium nigricans), this protein is Large ribosomal subunit protein bL12.